A 250-amino-acid polypeptide reads, in one-letter code: Isoprenyl transferase (250 aa).

Asp27 is an active-site residue. Asp27 provides a ligand contact to Mg(2+). Residues 28–31 (GNRR), Trp32, His48, and 76–78 (STE) each bind substrate. Asn79 acts as the Proton acceptor in catalysis. Substrate is bound by residues Phe80, Arg82, Arg199, and 205-207 (RVS). Position 218 (Glu218) interacts with Mg(2+).

The protein belongs to the UPP synthase family. As to quaternary structure, homodimer. The cofactor is Mg(2+).

Its function is as follows. Catalyzes the condensation of isopentenyl diphosphate (IPP) with allylic pyrophosphates generating different type of terpenoids. In Chlamydia pneumoniae (Chlamydophila pneumoniae), this protein is Isoprenyl transferase.